The primary structure comprises 758 residues: 5-methyltetrahydropteroyltriglutamate--homocysteine methyltransferase (758 aa).

Residues 16–19 and Lys-117 contribute to the 5-methyltetrahydropteroyltri-L-glutamate site; that span reads RELK. Residues 436–438 and Glu-489 each bind L-homocysteine; that span reads IGS. L-methionine is bound by residues 436–438 and Glu-489; that span reads IGS. 5-methyltetrahydropteroyltri-L-glutamate contacts are provided by residues 520–521 and Trp-566; that span reads RC. Asp-604 is a binding site for L-homocysteine. Asp-604 contacts L-methionine. Residue Glu-610 participates in 5-methyltetrahydropteroyltri-L-glutamate binding. Positions 646, 648, and 670 each coordinate Zn(2+). The active-site Proton donor is the His-699. Cys-731 serves as a coordination point for Zn(2+).

This sequence belongs to the vitamin-B12 independent methionine synthase family. The cofactor is Zn(2+).

The catalysed reaction is 5-methyltetrahydropteroyltri-L-glutamate + L-homocysteine = tetrahydropteroyltri-L-glutamate + L-methionine. Its pathway is amino-acid biosynthesis; L-methionine biosynthesis via de novo pathway; L-methionine from L-homocysteine (MetE route): step 1/1. Catalyzes the transfer of a methyl group from 5-methyltetrahydrofolate to homocysteine resulting in methionine formation. The polypeptide is 5-methyltetrahydropteroyltriglutamate--homocysteine methyltransferase (Ruthia magnifica subsp. Calyptogena magnifica).